Here is a 385-residue protein sequence, read N- to C-terminus: Transcription factor-like protein DPB (385 aa).

2 disordered regions span residues Met-1 to Ile-53 and Asp-71 to Arg-102. Residues Pro-22–Val-31 are compositionally biased toward polar residues. Over residues Ser-32–Ile-53 the composition is skewed to low complexity. Residues Gly-101–Pro-184 mediate DNA binding. Positions Asp-150 to Pro-184 match the DEF box motif. Residues Arg-185–Ser-234 are a coiled coil. The segment at Pro-296–Asn-385 is disordered. Positions Pro-300–Thr-327 are enriched in polar residues. A compositionally biased stretch (low complexity) spans His-336 to Gln-349. The segment covering Glu-355 to Asp-364 has biased composition (polar residues).

It belongs to the E2F/DP family. Heterodimer with non-phosphorylated E2FC. No interaction with phosphorylated E2FC. Interacts preferentially with E2FC, but also with E2FA and E2FB. Interacts with SKP2A. Targeted for proteasomal degradation by the SCF(SKP2A) E3 ubiquitin ligase complex. In terms of processing, phosphorylated. Ubiquitous.

It is found in the nucleus. The protein localises to the cytoplasm. In terms of biological role, involved in the regulation of the G1/S transition. Increases the DNA binding activity of E2F proteins after heterodimerization. The complex DPB/E2FC restricts cell division and lateral root initiation and may function as a negative regulator of E2F-regulated genes. The interaction with SKP2A is controlled by auxin. In Arabidopsis thaliana (Mouse-ear cress), this protein is Transcription factor-like protein DPB (DPB).